The primary structure comprises 114 residues: uncharacterized protein (114 aa).

The protein localises to the mitochondrion. This is an uncharacterized protein from Arabidopsis thaliana (Mouse-ear cress).